Here is a 127-residue protein sequence, read N- to C-terminus: Fluoride-specific ion channel FluC (127 aa).

4 helical membrane passes run 4–24, 37–57, 68–88, and 96–116; these read SLLV…LLGM, TVVA…FLAA, LIIT…AETV, and LLWA…MTAA. Residues G75 and T78 each contribute to the Na(+) site.

It belongs to the fluoride channel Fluc/FEX (TC 1.A.43) family.

It localises to the cell inner membrane. It carries out the reaction fluoride(in) = fluoride(out). Na(+) is not transported, but it plays an essential structural role and its presence is essential for fluoride channel function. In terms of biological role, fluoride-specific ion channel. Important for reducing fluoride concentration in the cell, thus reducing its toxicity. This Pseudomonas syringae pv. maculicola protein is Fluoride-specific ion channel FluC.